Reading from the N-terminus, the 152-residue chain is Superoxide dismutase [Cu-Zn] 2 (152 aa).

3 residues coordinate Cu cation: His-45, His-47, and His-62. A disulfide bridge connects residues Cys-56 and Cys-145. Residues His-62, His-70, His-79, and Asp-82 each contribute to the Zn(2+) site. Residue His-119 coordinates Cu cation.

This sequence belongs to the Cu-Zn superoxide dismutase family. As to quaternary structure, homodimer. Cu cation is required as a cofactor. It depends on Zn(2+) as a cofactor.

It localises to the cytoplasm. The catalysed reaction is 2 superoxide + 2 H(+) = H2O2 + O2. Its function is as follows. Destroys radicals which are normally produced within the cells and which are toxic to biological systems. The polypeptide is Superoxide dismutase [Cu-Zn] 2 (SODCC2) (Oryza sativa subsp. japonica (Rice)).